We begin with the raw amino-acid sequence, 215 residues long: tRNA (guanine-N(7)-)-methyltransferase (215 aa).

S-adenosyl-L-methionine is bound by residues Asp-43, Glu-68, Asn-95, and Asp-121. The active site involves Asp-121. Positions 125 and 157 each coordinate substrate.

It belongs to the class I-like SAM-binding methyltransferase superfamily. TrmB family.

The catalysed reaction is guanosine(46) in tRNA + S-adenosyl-L-methionine = N(7)-methylguanosine(46) in tRNA + S-adenosyl-L-homocysteine. It participates in tRNA modification; N(7)-methylguanine-tRNA biosynthesis. In terms of biological role, catalyzes the formation of N(7)-methylguanine at position 46 (m7G46) in tRNA. In Trichormus variabilis (strain ATCC 29413 / PCC 7937) (Anabaena variabilis), this protein is tRNA (guanine-N(7)-)-methyltransferase.